The sequence spans 288 residues: Ion-translocating oxidoreductase complex subunit D (288 aa).

Helical transmembrane passes span 26 to 46 (IVALLPISAAAVYFFGFAALG), 47 to 67 (NIIASILGAVGIEFVIQKAFN), 80 to 100 (LGLLLALICPPTLPAWMIFIG), 101 to 121 (GAFAVGVGKHAFGGIGSYTFH), 126 to 146 (AWVFLSLAWAQDMLPGTIPIL), 159 to 179 (GFLTDVSPILVLLAGVILILV), 200 to 220 (VLGDPLAYVVSGTFLLGVFFI), 235 to 255 (IVYGILCGFLTVIYGYFSGNY), and 256 to 276 (VWGTLYALLLSNAVAPFIELK).

The protein belongs to the NqrB/RnfD family. As to quaternary structure, the Rnf complex is probably composed of eight subunits, including RnfA, RnfB, RnfC, RnfD, RnfE and RnfG. FMN is required as a cofactor.

Its subcellular location is the cell membrane. Part of a membrane-bound complex that couples electron transfer with translocation of ions across the membrane. Catalyzes Na(+) transport, most probably coupled to electron transfer from reduced ferredoxin to methanophenazine and heterodisulfide reductase. Involved in heterodisulfide reduction during methanogenesis from acetate. In Methanosarcina acetivorans (strain ATCC 35395 / DSM 2834 / JCM 12185 / C2A), this protein is Ion-translocating oxidoreductase complex subunit D.